A 554-amino-acid chain; its full sequence is Nuclear division defective protein 1 (554 aa).

Disordered regions lie at residues 1–31 (MDRDISYQQNYTSTGATATSSRQPSTDNNAD) and 98–117 (IQQQQQQQQQQQQQQQALGS). Over residues 98 to 113 (IQQQQQQQQQQQQQQQ) the composition is skewed to low complexity. Phosphothreonine; by CDC28 is present on Thr-319. Disordered stretches follow at residues 410–475 (PTPN…GKKP) and 493–554 (SSSS…FNSQ). Positions 411-427 (TPNCNSLHSTTTGTSAL) are enriched in polar residues. The segment covering 448–465 (SSSNTVSFKSKSGNNNSK) has biased composition (low complexity). Basic residues predominate over residues 466-475 (GRIKKNGKKP). Over residues 493-513 (SSSSLSSSLNASSSAGNSNSN) the composition is skewed to low complexity. Positions 515 to 524 (TKKRASKLKR) are enriched in basic residues. The span at 525–536 (SQSLLSDSGSKS) shows a compositional bias: low complexity. Residues 539 to 554 (RKSCNSKSNGNLFNSQ) are compositionally biased toward polar residues.

Forms an activator complex with FKH2. Post-translationally, phosphorylation of Thr-319 by CDC28 is required for the interaction with FKH2 and recruitment to promoters.

It localises to the cytoplasm. The protein resides in the nucleus. Functionally, transcription activator involved in G2/M transcription through its association with FKH2. The polypeptide is Nuclear division defective protein 1 (NDD1) (Saccharomyces cerevisiae (strain ATCC 204508 / S288c) (Baker's yeast)).